The following is a 430-amino-acid chain: 3-phosphoshikimate 1-carboxyvinyltransferase (430 aa).

Residues Lys-21, Ser-22, and Arg-26 each coordinate 3-phosphoshikimate. A phosphoenolpyruvate-binding site is contributed by Lys-21. Phosphoenolpyruvate is bound by residues Gly-94 and Arg-122. 3-phosphoshikimate is bound by residues Ser-167, Gln-169, Asp-317, and Lys-344. Position 169 (Gln-169) interacts with phosphoenolpyruvate. Asp-317 functions as the Proton acceptor in the catalytic mechanism. Residues Arg-348 and Arg-390 each coordinate phosphoenolpyruvate.

The protein belongs to the EPSP synthase family. Monomer.

It is found in the cytoplasm. The enzyme catalyses 3-phosphoshikimate + phosphoenolpyruvate = 5-O-(1-carboxyvinyl)-3-phosphoshikimate + phosphate. It functions in the pathway metabolic intermediate biosynthesis; chorismate biosynthesis; chorismate from D-erythrose 4-phosphate and phosphoenolpyruvate: step 6/7. Functionally, catalyzes the transfer of the enolpyruvyl moiety of phosphoenolpyruvate (PEP) to the 5-hydroxyl of shikimate-3-phosphate (S3P) to produce enolpyruvyl shikimate-3-phosphate and inorganic phosphate. This Thermodesulfovibrio yellowstonii (strain ATCC 51303 / DSM 11347 / YP87) protein is 3-phosphoshikimate 1-carboxyvinyltransferase.